Consider the following 273-residue polypeptide: Putative phosphoenolpyruvate synthase regulatory protein (273 aa).

153 to 160 (GVSRSGKT) serves as a coordination point for ADP.

The protein belongs to the pyruvate, phosphate/water dikinase regulatory protein family. PSRP subfamily.

It carries out the reaction [pyruvate, water dikinase] + ADP = [pyruvate, water dikinase]-phosphate + AMP + H(+). It catalyses the reaction [pyruvate, water dikinase]-phosphate + phosphate + H(+) = [pyruvate, water dikinase] + diphosphate. Bifunctional serine/threonine kinase and phosphorylase involved in the regulation of the phosphoenolpyruvate synthase (PEPS) by catalyzing its phosphorylation/dephosphorylation. The sequence is that of Putative phosphoenolpyruvate synthase regulatory protein from Albidiferax ferrireducens (strain ATCC BAA-621 / DSM 15236 / T118) (Rhodoferax ferrireducens).